The following is a 292-amino-acid chain: Ribosomal protein L11 methyltransferase (292 aa).

S-adenosyl-L-methionine is bound by residues threonine 143, glycine 164, aspartate 186, and asparagine 228.

This sequence belongs to the methyltransferase superfamily. PrmA family.

The protein localises to the cytoplasm. It carries out the reaction L-lysyl-[protein] + 3 S-adenosyl-L-methionine = N(6),N(6),N(6)-trimethyl-L-lysyl-[protein] + 3 S-adenosyl-L-homocysteine + 3 H(+). In terms of biological role, methylates ribosomal protein L11. The chain is Ribosomal protein L11 methyltransferase from Tolumonas auensis (strain DSM 9187 / NBRC 110442 / TA 4).